Consider the following 395-residue polypeptide: Elongation factor Tu (395 aa).

A tr-type G domain is found at 10–204; sequence KPHVNIGTIG…EVDAYIPTPE (195 aa). Residues 19 to 26 form a G1 region; that stretch reads GHVDHGKT. 19-26 serves as a coordination point for GTP; that stretch reads GHVDHGKT. Thr-26 contacts Mg(2+). The tract at residues 60-64 is G2; sequence GITIS. The interval 81-84 is G3; it reads DCPG. GTP-binding positions include 81 to 85 and 136 to 139; these read DCPGH and NKCD. The G4 stretch occupies residues 136-139; sequence NKCD. A G5 region spans residues 174-176; the sequence is SAL.

It belongs to the TRAFAC class translation factor GTPase superfamily. Classic translation factor GTPase family. EF-Tu/EF-1A subfamily. Monomer.

It is found in the cytoplasm. The enzyme catalyses GTP + H2O = GDP + phosphate + H(+). GTP hydrolase that promotes the GTP-dependent binding of aminoacyl-tRNA to the A-site of ribosomes during protein biosynthesis. In Bacillus cereus (strain G9842), this protein is Elongation factor Tu.